The primary structure comprises 100 residues: Small ribosomal subunit protein uS14c (100 aa).

Belongs to the universal ribosomal protein uS14 family. Part of the 30S ribosomal subunit.

The protein localises to the plastid. It is found in the chloroplast. Binds 16S rRNA, required for the assembly of 30S particles. The sequence is that of Small ribosomal subunit protein uS14c from Adiantum capillus-veneris (Maidenhair fern).